The sequence spans 212 residues: Cytidylate kinase (212 aa).

Position 7 to 15 (7 to 15) interacts with ATP; it reads GPAASGKGT.

This sequence belongs to the cytidylate kinase family. Type 1 subfamily.

The protein resides in the cytoplasm. The catalysed reaction is CMP + ATP = CDP + ADP. It carries out the reaction dCMP + ATP = dCDP + ADP. The protein is Cytidylate kinase of Nitrobacter winogradskyi (strain ATCC 25391 / DSM 10237 / CIP 104748 / NCIMB 11846 / Nb-255).